The sequence spans 107 residues: uncharacterized protein (107 aa).

Residues 37–59 (MVFSFLTVMPGDFIKCLFLRFFV) form a helical membrane-spanning segment.

It localises to the membrane. This is an uncharacterized protein from Saccharomyces cerevisiae (strain ATCC 204508 / S288c) (Baker's yeast).